The primary structure comprises 150 residues: Small ribosomal subunit protein uS13 (150 aa).

Belongs to the universal ribosomal protein uS13 family. As to quaternary structure, part of the 30S ribosomal subunit. Forms a loose heterodimer with protein S19. Forms two bridges to the 50S subunit in the 70S ribosome.

Its function is as follows. Located at the top of the head of the 30S subunit, it contacts several helices of the 16S rRNA. In the 70S ribosome it contacts the 23S rRNA (bridge B1a) and protein L5 of the 50S subunit (bridge B1b), connecting the 2 subunits; these bridges are implicated in subunit movement. The sequence is that of Small ribosomal subunit protein uS13 from Methanocorpusculum labreanum (strain ATCC 43576 / DSM 4855 / Z).